The primary structure comprises 235 residues: Aspartate/glutamate leucyltransferase (235 aa).

The protein belongs to the R-transferase family. Bpt subfamily.

The protein localises to the cytoplasm. It catalyses the reaction N-terminal L-glutamyl-[protein] + L-leucyl-tRNA(Leu) = N-terminal L-leucyl-L-glutamyl-[protein] + tRNA(Leu) + H(+). The enzyme catalyses N-terminal L-aspartyl-[protein] + L-leucyl-tRNA(Leu) = N-terminal L-leucyl-L-aspartyl-[protein] + tRNA(Leu) + H(+). Functions in the N-end rule pathway of protein degradation where it conjugates Leu from its aminoacyl-tRNA to the N-termini of proteins containing an N-terminal aspartate or glutamate. The chain is Aspartate/glutamate leucyltransferase from Pseudomonas fluorescens (strain ATCC BAA-477 / NRRL B-23932 / Pf-5).